Here is a 125-residue protein sequence, read N- to C-terminus: Small ribosomal subunit protein uS13 (125 aa).

The segment at 101 to 125 (QRTKTNARTRKGKRKTVANKKIAAK) is disordered.

This sequence belongs to the universal ribosomal protein uS13 family. As to quaternary structure, part of the 30S ribosomal subunit. Forms a loose heterodimer with protein S19. Forms two bridges to the 50S subunit in the 70S ribosome.

Functionally, located at the top of the head of the 30S subunit, it contacts several helices of the 16S rRNA. In the 70S ribosome it contacts the 23S rRNA (bridge B1a) and protein L5 of the 50S subunit (bridge B1b), connecting the 2 subunits; these bridges are implicated in subunit movement. Contacts the tRNAs in the A and P-sites. The chain is Small ribosomal subunit protein uS13 from Borrelia duttonii (strain Ly).